Here is a 68-residue protein sequence, read N- to C-terminus: Large ribosomal subunit protein uL29 (68 aa).

It belongs to the universal ribosomal protein uL29 family.

The polypeptide is Large ribosomal subunit protein uL29 (Chlorobaculum parvum (strain DSM 263 / NCIMB 8327) (Chlorobium vibrioforme subsp. thiosulfatophilum)).